A 726-amino-acid polypeptide reads, in one-letter code: A-type inclusion protein A25 homolog (726 aa).

The interval 342 to 361 (TNTGIEEPHATGGDKEDQPI) is disordered. Positions 347 to 360 (EEPHATGGDKEDQP) are enriched in basic and acidic residues. A run of 4 repeats spans residues 612-634 (RELE…CTRN), 639-661 (QEVD…CIES), 667-689 (TEIS…CRGN), and 691-713 (TEIS…CRRN). The segment at 612-713 (RELEEERRRV…ERQLNDCRRN (102 aa)) is 4 X approximate tandem repeats.

It belongs to the poxviridae A25 protein family. In terms of assembly, interacts (via N-terminus) with protein A26.

It localises to the virion. Functionally, structural protein that forms a matrix surrounding the mature virion (MV) through interaction with protein A26. Presence of protein A25 in the virion structurally prevents direct virus-cell fusion mechanism. The chain is A-type inclusion protein A25 homolog from Camelus.